Reading from the N-terminus, the 67-residue chain is Large ribosomal subunit protein uL29 (67 aa).

Belongs to the universal ribosomal protein uL29 family.

In Rhizorhabdus wittichii (strain DSM 6014 / CCUG 31198 / JCM 15750 / NBRC 105917 / EY 4224 / RW1) (Sphingomonas wittichii), this protein is Large ribosomal subunit protein uL29.